The following is a 214-amino-acid chain: Large ribosomal subunit protein uL16 (214 aa).

Arginine 32 is subject to Citrulline. Lysine 175 participates in a covalent cross-link: Glycyl lysine isopeptide (Lys-Gly) (interchain with G-Cter in SUMO2). Residue lysine 188 forms a Glycyl lysine isopeptide (Lys-Gly) (interchain with G-Cter in ubiquitin) linkage.

Belongs to the universal ribosomal protein uL16 family. In terms of assembly, component of the large ribosomal subunit. Mature ribosomes consist of a small (40S) and a large (60S) subunit. The 40S subunit contains about 33 different proteins and 1 molecule of RNA (18S). The 60S subunit contains about 49 different proteins and 3 molecules of RNA (28S, 5.8S and 5S). In terms of processing, citrullinated by PADI4. Ufmylated by UFL1.

It is found in the cytoplasm. Its function is as follows. Component of the large ribosomal subunit. Plays a role in the formation of actively translating ribosomes. May play a role in the embryonic brain development. The protein is Large ribosomal subunit protein uL16 of Homo sapiens (Human).